The primary structure comprises 189 residues: Glycerol-3-phosphate acyltransferase 1 (189 aa).

Helical transmembrane passes span 12–32 (MQFL…AYIV), 61–81 (GYFV…VSIA), 88–108 (FTFV…PMLF), 124–144 (IAFD…FYLI), and 164–184 (ILYS…VLIL).

The protein belongs to the PlsY family. As to quaternary structure, probably interacts with PlsX.

Its subcellular location is the cell membrane. The enzyme catalyses an acyl phosphate + sn-glycerol 3-phosphate = a 1-acyl-sn-glycero-3-phosphate + phosphate. Its pathway is lipid metabolism; phospholipid metabolism. Its function is as follows. Catalyzes the transfer of an acyl group from acyl-phosphate (acyl-PO(4)) to glycerol-3-phosphate (G3P) to form lysophosphatidic acid (LPA). This enzyme utilizes acyl-phosphate as fatty acyl donor, but not acyl-CoA or acyl-ACP. This is Glycerol-3-phosphate acyltransferase 1 from Bacillus anthracis.